Reading from the N-terminus, the 413-residue chain is Peptidase T (413 aa).

His-81 provides a ligand contact to Zn(2+). Residue Asp-83 is part of the active site. Zn(2+) is bound at residue Asp-143. Catalysis depends on Glu-178, which acts as the Proton acceptor. Zn(2+)-binding residues include Glu-179, Asp-201, and His-383.

The protein belongs to the peptidase M20B family. In terms of assembly, homodimer. Zn(2+) is required as a cofactor.

The protein resides in the cytoplasm. The catalysed reaction is Release of the N-terminal residue from a tripeptide.. With respect to regulation, inhibited by EDTA, by the reducing agents dithiothreitol and 13-mercaptoethanol, and by the divalent cation Cu(2+). Its function is as follows. Cleaves the N-terminal amino acid of tripeptides. Has a broad specificity for tripeptides with no clear preference for a particular tripeptide. Tripeptides with proline in the second position are an exception and are not hydrolyzed. Does not hydrolyze dipeptides, tetrapeptides, or oligopeptides. The chain is Peptidase T (pepT) from Lactococcus lactis subsp. cremoris (Streptococcus cremoris).